We begin with the raw amino-acid sequence, 428 residues long: Trigger factor (428 aa).

Residues 163 to 248 (GDTAVIDFEG…INEVKAKELP (86 aa)) form the PPIase FKBP-type domain.

The protein belongs to the FKBP-type PPIase family. Tig subfamily.

Its subcellular location is the cytoplasm. It carries out the reaction [protein]-peptidylproline (omega=180) = [protein]-peptidylproline (omega=0). In terms of biological role, involved in protein export. Acts as a chaperone by maintaining the newly synthesized protein in an open conformation. Functions as a peptidyl-prolyl cis-trans isomerase. This chain is Trigger factor, found in Oceanobacillus iheyensis (strain DSM 14371 / CIP 107618 / JCM 11309 / KCTC 3954 / HTE831).